Reading from the N-terminus, the 238-residue chain is Purine nucleoside phosphorylase DeoD-type (238 aa).

His-4 lines the a purine D-ribonucleoside pocket. Phosphate contacts are provided by residues Gly-20, Arg-24, Arg-43, and 87–90; that span reads RVGS. A purine D-ribonucleoside contacts are provided by residues 179-181 and 203-204; these read EME and SD. Asp-204 (proton donor) is an active-site residue.

The protein belongs to the PNP/UDP phosphorylase family. As to quaternary structure, homohexamer; trimer of homodimers.

The enzyme catalyses a purine D-ribonucleoside + phosphate = a purine nucleobase + alpha-D-ribose 1-phosphate. It carries out the reaction a purine 2'-deoxy-D-ribonucleoside + phosphate = a purine nucleobase + 2-deoxy-alpha-D-ribose 1-phosphate. Its function is as follows. Catalyzes the reversible phosphorolytic breakdown of the N-glycosidic bond in the beta-(deoxy)ribonucleoside molecules, with the formation of the corresponding free purine bases and pentose-1-phosphate. This Histophilus somni (strain 2336) (Haemophilus somnus) protein is Purine nucleoside phosphorylase DeoD-type.